The following is a 643-amino-acid chain: Probable extracellular metalloproteinase 4 (643 aa).

An N-terminal signal peptide occupies residues 1–18 (MHGLLLAGLLALPLNVFA). The propeptide occupies 19–254 (HPTESHSSGV…VHSVVDYVSA (236 aa)). Residues 49–69 (SDAVPKQDGESFTTSSTGDDN) are disordered. Polar residues predominate over residues 58–69 (ESFTTSSTGDDN). N-linked (GlcNAc...) asparagine glycans are attached at residues asparagine 271 and asparagine 420. Zn(2+) is bound at residue histidine 437. Residue glutamate 438 is part of the active site. Histidine 441 serves as a coordination point for Zn(2+). Residues asparagine 603 and asparagine 629 are each glycosylated (N-linked (GlcNAc...) asparagine).

The protein belongs to the peptidase M36 family. The cofactor is Zn(2+).

Its subcellular location is the secreted. Its function is as follows. Secreted metalloproteinase probably acting as a virulence factor. In Trichophyton verrucosum (strain HKI 0517), this protein is Probable extracellular metalloproteinase 4 (MEP4).